The primary structure comprises 165 residues: Secreted acidic protein 2 (165 aa).

Acidic residues-rich tracts occupy residues 1–58 (WSXS…DDSG) and 80–102 (ESSD…DAYN). Residues 1-112 (WSXSGDDDDD…DDSQAGELNS (112 aa)) form a disordered region. A compositionally biased stretch (polar residues) spans 103-112 (DDSQAGELNS).

Component of the acid-insoluble and acid-soluble organic matrix of the aragonitic skeleton (at protein level).

The protein resides in the secreted. This chain is Secreted acidic protein 2, found in Acropora millepora (Staghorn coral).